The sequence spans 223 residues: Ribonuclease 3 (223 aa).

Residues 3-125 enclose the RNase III domain; that stretch reads LEKLQKKLGH…LIAAIYLDAG (123 aa). Position 38 (E38) interacts with Mg(2+). Residue D42 is part of the active site. Mg(2+) is bound by residues D111 and E114. The active site involves E114. One can recognise a DRBM domain in the interval 152–222; sequence DPKTRLQEFL…AQQAIEKLKI (71 aa).

This sequence belongs to the ribonuclease III family. Homodimer. It depends on Mg(2+) as a cofactor.

The protein localises to the cytoplasm. The catalysed reaction is Endonucleolytic cleavage to 5'-phosphomonoester.. Digests double-stranded RNA. Involved in the processing of primary rRNA transcript to yield the immediate precursors to the large and small rRNAs (23S and 16S). Processes some mRNAs, and tRNAs when they are encoded in the rRNA operon. Processes pre-crRNA and tracrRNA of type II CRISPR loci if present in the organism. The sequence is that of Ribonuclease 3 from Histophilus somni (strain 2336) (Haemophilus somnus).